A 39-amino-acid polypeptide reads, in one-letter code: Photosystem II reaction center protein Y (39 aa).

Residues 5–23 (VLIVLTPLLIAGGWAVFNI) form a helical membrane-spanning segment.

The protein belongs to the PsbY family. PSII is composed of 1 copy each of membrane proteins PsbA, PsbB, PsbC, PsbD, PsbE, PsbF, PsbH, PsbI, PsbJ, PsbK, PsbL, PsbM, PsbT, PsbX, PsbY, PsbZ, Psb30/Ycf12, peripheral proteins PsbO, CyanoQ (PsbQ), PsbU, PsbV and a large number of cofactors. It forms dimeric complexes.

The protein resides in the cellular thylakoid membrane. In terms of biological role, loosely associated component of the core of photosystem II (PSII), it is not always seen in crystals. PSII is a light-driven water plastoquinone oxidoreductase, using light energy to abstract electrons from H(2)O, generating a proton gradient subsequently used for ATP formation. This chain is Photosystem II reaction center protein Y, found in Microcystis aeruginosa (strain NIES-843 / IAM M-2473).